The sequence spans 24 residues: uncharacterized protein (24 aa).

Residues 1–3 lie on the Cytoplasmic side of the membrane; that stretch reads MKK. The chain crosses the membrane as a helical span at residues 4–24; that stretch reads TTIIMMGVAIIVVLGTELGWW.

The protein localises to the cell inner membrane. This is an uncharacterized protein from Escherichia coli (strain K12).